The sequence spans 323 residues: D-specific alpha-keto acid dehydrogenase (323 aa).

NAD(+) is bound by residues histidine 157–isoleucine 158, threonine 230–arginine 232, and aspartate 256. Arginine 232 is a catalytic residue. Residue glutamate 261 is part of the active site. Catalysis depends on histidine 293, which acts as the Proton donor. Histidine 293–tyrosine 296 serves as a coordination point for NAD(+).

This sequence belongs to the D-isomer specific 2-hydroxyacid dehydrogenase family.

Its function is as follows. Required for high-level resistance to glycopeptides antibiotics. Catalyzes the reduction of 2-keto acids to 2-D-hydroxy acids that give rise to peptidoglycan precursors that terminate in the depsipeptide D-alanine-2-lactate rather than the dipeptide D-alanine-D-alanine thus preventing vancomycin binding. This Enterococcus faecalis (strain ATCC 700802 / V583) protein is D-specific alpha-keto acid dehydrogenase (vanHB).